The chain runs to 277 residues: Cation-dependent mannose-6-phosphate receptor (277 aa).

The signal sequence occupies residues 1–26; the sequence is MFPFYSCWRTGLLLLLLAVAVRESWQ. Topologically, residues 27–185 are lumenal; it reads TEEKTCDLVG…SLACSPEISH (159 aa). Residues 30–181 form the MRH domain; that stretch reads KTCDLVGEKG…EMDSSLACSP (152 aa). A disulfide bridge connects residues Cys32 and Cys78. N-linked (GlcNAc...) asparagine glycosylation is found at Asn57, Asn83, Asn94, Asn107, and Asn113. Intrachain disulfides connect Cys132–Cys167 and Cys145–Cys179. The helical transmembrane segment at 186–210 threads the bilayer; sequence LSVGSILLVTFASLVAVYVVGGFLY. Topologically, residues 211 to 277 are cytoplasmic; that stretch reads QRLVVGAKGM…EERDDHLLPM (67 aa). The interval 256–277 is disordered; sequence RGVGDDQLGEESEERDDHLLPM. At Ser267 the chain carries Phosphoserine.

Homodimer. Binds GGA1, GGA2 and GGA3.

The protein localises to the lysosome membrane. In terms of biological role, transport of phosphorylated lysosomal enzymes from the Golgi complex and the cell surface to lysosomes. Lysosomal enzymes bearing phosphomannosyl residues bind specifically to mannose-6-phosphate receptors in the Golgi apparatus and the resulting receptor-ligand complex is transported to an acidic prelyosomal compartment where the low pH mediates the dissociation of the complex. The protein is Cation-dependent mannose-6-phosphate receptor (M6PR) of Homo sapiens (Human).